The primary structure comprises 329 residues: 4-hydroxythreonine-4-phosphate dehydrogenase (329 aa).

Substrate is bound by residues histidine 136 and threonine 137. 3 residues coordinate a divalent metal cation: histidine 166, histidine 211, and histidine 266. Substrate is bound by residues lysine 274, asparagine 283, and arginine 292.

The protein belongs to the PdxA family. As to quaternary structure, homodimer. Zn(2+) serves as cofactor. It depends on Mg(2+) as a cofactor. Requires Co(2+) as cofactor.

It is found in the cytoplasm. The enzyme catalyses 4-(phosphooxy)-L-threonine + NAD(+) = 3-amino-2-oxopropyl phosphate + CO2 + NADH. Its pathway is cofactor biosynthesis; pyridoxine 5'-phosphate biosynthesis; pyridoxine 5'-phosphate from D-erythrose 4-phosphate: step 4/5. Catalyzes the NAD(P)-dependent oxidation of 4-(phosphooxy)-L-threonine (HTP) into 2-amino-3-oxo-4-(phosphooxy)butyric acid which spontaneously decarboxylates to form 3-amino-2-oxopropyl phosphate (AHAP). This is 4-hydroxythreonine-4-phosphate dehydrogenase from Shigella flexneri serotype 5b (strain 8401).